Here is a 100-residue protein sequence, read N- to C-terminus: Large ribosomal subunit protein uL23 (100 aa).

The protein belongs to the universal ribosomal protein uL23 family. As to quaternary structure, part of the 50S ribosomal subunit. Contacts protein L29, and trigger factor when it is bound to the ribosome.

One of the early assembly proteins it binds 23S rRNA. One of the proteins that surrounds the polypeptide exit tunnel on the outside of the ribosome. Forms the main docking site for trigger factor binding to the ribosome. The protein is Large ribosomal subunit protein uL23 of Edwardsiella ictaluri (strain 93-146).